Here is a 402-residue protein sequence, read N- to C-terminus: Diaminopimelate decarboxylase (402 aa).

At Lys-61 the chain carries N6-(pyridoxal phosphate)lysine. Pyridoxal 5'-phosphate contacts are provided by residues Gly-233 and Glu-269–Arg-272. Positions 272, 304, 308, 334, and 360 each coordinate substrate. A pyridoxal 5'-phosphate-binding site is contributed by Tyr-360.

The protein belongs to the Orn/Lys/Arg decarboxylase class-II family. LysA subfamily. As to quaternary structure, homodimer. Pyridoxal 5'-phosphate is required as a cofactor.

The enzyme catalyses meso-2,6-diaminopimelate + H(+) = L-lysine + CO2. Its pathway is amino-acid biosynthesis; L-lysine biosynthesis via DAP pathway; L-lysine from DL-2,6-diaminopimelate: step 1/1. Specifically catalyzes the decarboxylation of meso-diaminopimelate (meso-DAP) to L-lysine. This is Diaminopimelate decarboxylase from Thermoplasma acidophilum (strain ATCC 25905 / DSM 1728 / JCM 9062 / NBRC 15155 / AMRC-C165).